The following is a 386-amino-acid chain: Synaptotagmin-5 (386 aa).

Pro residues predominate over residues 1 to 16 (MFPEPPTLGSPAPKTP). The segment at 1-21 (MFPEPPTLGSPAPKTPPDSSR) is disordered. Residues 1–24 (MFPEPPTLGSPAPKTPPDSSRIRQ) lie on the Vesicular side of the membrane. The chain crosses the membrane as a helical span at residues 25-45 (GAVPAWVLATIVLGSGLLVFS). At 46-386 (SCFCLYRKRC…PDRARPIPAP (341 aa)) the chain is on the cytoplasmic side. C2 domains lie at 108 to 227 (QLGR…QAWR) and 239 to 372 (KLGD…AQWH). Ca(2+) is bound by residues Leu138, Asp139, Asp145, Asp197, Phe198, Asp199, Ser202, Asp205, Asp270, Asp276, Asp330, and Asp332.

It belongs to the synaptotagmin family. As to quaternary structure, homodimer. Interacts with both alpha- and beta-tubulin. Ca(2+) is required as a cofactor.

It is found in the cytoplasmic vesicle. The protein resides in the secretory vesicle. The protein localises to the synaptic vesicle membrane. Its subcellular location is the recycling endosome membrane. Functionally, may be involved in Ca(2+)-dependent exocytosis of secretory vesicles through Ca(2+) and phospholipid binding to the C2 domain or may serve as Ca(2+) sensors in the process of vesicular trafficking and exocytosis. Regulates the Ca(2+)-dependent secretion of norepinephrine in PC12 cells. Required for export from the endocytic recycling compartment to the cell surface. This Mus musculus (Mouse) protein is Synaptotagmin-5 (Syt5).